The chain runs to 267 residues: Trehalose-phosphate phosphatase (267 aa).

Asp-20 functions as the Nucleophile in the catalytic mechanism. Mg(2+)-binding residues include Asp-20, Asp-22, and Asp-198. Substrate is bound at residue 20–22 (DLD).

The protein belongs to the trehalose phosphatase family. Mg(2+) is required as a cofactor.

The enzyme catalyses alpha,alpha-trehalose 6-phosphate + H2O = alpha,alpha-trehalose + phosphate. The protein operates within glycan biosynthesis; trehalose biosynthesis. Removes the phosphate from trehalose 6-phosphate to produce free trehalose. The sequence is that of Trehalose-phosphate phosphatase (otsB) from Salmonella typhimurium (strain LT2 / SGSC1412 / ATCC 700720).